The following is a 190-amino-acid chain: Adenine phosphoribosyltransferase (190 aa).

This sequence belongs to the purine/pyrimidine phosphoribosyltransferase family. Homodimer.

It localises to the cytoplasm. The catalysed reaction is AMP + diphosphate = 5-phospho-alpha-D-ribose 1-diphosphate + adenine. It participates in purine metabolism; AMP biosynthesis via salvage pathway; AMP from adenine: step 1/1. Its function is as follows. Catalyzes a salvage reaction resulting in the formation of AMP, that is energically less costly than de novo synthesis. The chain is Adenine phosphoribosyltransferase from Treponema denticola (strain ATCC 35405 / DSM 14222 / CIP 103919 / JCM 8153 / KCTC 15104).